The chain runs to 347 residues: Quinolinate synthase (347 aa).

Residues His-47 and Ser-68 each contribute to the iminosuccinate site. Cys-113 is a binding site for [4Fe-4S] cluster. Iminosuccinate contacts are provided by residues 139-141 and Ser-156; that span reads YAN. Cys-200 provides a ligand contact to [4Fe-4S] cluster. Iminosuccinate contacts are provided by residues 226-228 and Thr-243; that span reads HPE. Cys-297 is a binding site for [4Fe-4S] cluster.

The protein belongs to the quinolinate synthase family. Type 1 subfamily. [4Fe-4S] cluster serves as cofactor.

It localises to the cytoplasm. It carries out the reaction iminosuccinate + dihydroxyacetone phosphate = quinolinate + phosphate + 2 H2O + H(+). It participates in cofactor biosynthesis; NAD(+) biosynthesis; quinolinate from iminoaspartate: step 1/1. In terms of biological role, catalyzes the condensation of iminoaspartate with dihydroxyacetone phosphate to form quinolinate. The chain is Quinolinate synthase from Shigella flexneri.